A 269-amino-acid chain; its full sequence is Protein-L-isoaspartate O-methyltransferase (269 aa).

The tract at residues 1 to 53 (MSAGQRPAPKFPLRLDQVKPAGRSGAAPLLRPQRPLHQAATERGRGTTPAGLG) is disordered. The active site involves serine 113.

The protein belongs to the methyltransferase superfamily. L-isoaspartyl/D-aspartyl protein methyltransferase family.

The protein resides in the cytoplasm. The enzyme catalyses [protein]-L-isoaspartate + S-adenosyl-L-methionine = [protein]-L-isoaspartate alpha-methyl ester + S-adenosyl-L-homocysteine. Catalyzes the methyl esterification of L-isoaspartyl residues in peptides and proteins that result from spontaneous decomposition of normal L-aspartyl and L-asparaginyl residues. It plays a role in the repair and/or degradation of damaged proteins. This is Protein-L-isoaspartate O-methyltransferase from Methylibium petroleiphilum (strain ATCC BAA-1232 / LMG 22953 / PM1).